Here is a 328-residue protein sequence, read N- to C-terminus: Nickel import system permease protein NikB (328 aa).

Transmembrane regions (helical) follow at residues 11 to 31 (LMQMIVVLFVISTLTFILMKL), 104 to 124 (LLISFSTLVVSLCISIPLGII), 139 to 159 (VISTLSISLPAFFIGIILLFI), 170 to 190 (ILSQFILPVITLSLGMCAYII), 229 to 249 (ILPIIPLLGISLGSLIGGTVV), and 279 to 299 (VLFIGFFVVIINTIADLLTLL). One can recognise an ABC transmembrane type-1 domain in the interval 100 to 297 (APITLLISFS…IINTIADLLT (198 aa)).

It belongs to the binding-protein-dependent transport system permease family. OppBC subfamily. As to quaternary structure, the complex is composed of two ATP-binding proteins (NikD and NikE), two transmembrane proteins (NikB and NikC) and a solute-binding protein (NikA).

The protein resides in the cell membrane. Part of the ABC transporter complex NikABCDE (Opp2) involved in nickel import. Probably responsible for the translocation of the substrate across the membrane. The protein is Nickel import system permease protein NikB of Staphylococcus aureus (strain Mu50 / ATCC 700699).